Reading from the N-terminus, the 92-residue chain is Small ribosomal subunit protein uS19c (92 aa).

This sequence belongs to the universal ribosomal protein uS19 family.

The protein localises to the plastid. Its subcellular location is the chloroplast. Its function is as follows. Protein S19 forms a complex with S13 that binds strongly to the 16S ribosomal RNA. The polypeptide is Small ribosomal subunit protein uS19c (Ceratophyllum demersum (Rigid hornwort)).